The primary structure comprises 433 residues: Acetyl-CoA acetyltransferase erg10A, mitochondrial (433 aa).

A mitochondrion-targeting transit peptide spans 1–34 (MAIQTTTGLAARLVAKRATFPASRRNFSASRSAL). Cys-124 acts as the Acyl-thioester intermediate in catalysis. Residue Tyr-219 coordinates K(+). CoA is bound by residues Asn-229 and Lys-262. Ala-280 serves as a coordination point for K(+). A CoA-binding site is contributed by Ser-284. Active-site proton acceptor residues include His-387 and Cys-415. Residue Asn-416 participates in chloride binding.

It belongs to the thiolase-like superfamily. Thiolase family. Homotetramer. K(+) is required as a cofactor.

It is found in the mitochondrion. It catalyses the reaction 2 acetyl-CoA = acetoacetyl-CoA + CoA. The protein operates within metabolic intermediate biosynthesis; (R)-mevalonate biosynthesis; (R)-mevalonate from acetyl-CoA: step 1/3. Mitochondrial acetyl-CoA acetyltransferase that catalyzes both the formation and degradation of acetoacetyl-CoA. Has no overlapping function with erg10B and seems not to be involved in ergosterol biosynthesis. Plays an important role in growth, morphogenesis and maintaining mitochondrial function including the response to oxidative stresses. The sequence is that of Acetyl-CoA acetyltransferase erg10A, mitochondrial from Aspergillus fumigatus (strain ATCC MYA-4609 / CBS 101355 / FGSC A1100 / Af293) (Neosartorya fumigata).